Consider the following 302-residue polypeptide: MMAVAAATRIAVVVVAALAALAPGARGLRRDDFPVGFLFGAATSAYQVGWSIMGCSHGGWVWSLPFLVDPGRISDRRNGDVADDHYHRYTEDVEILHNLGVNSYRFSISWARILPSRFGGVNSAGIAFYNRLIDALLQKGIQPFVTLNHFDIPQELEIRYGGWLGAGIREEFGYYSDVCFKAFGDRVRFWTTFNEPNLITKFQFMLGAYPPNRCSPPFGSCNSGDSRREPYTAAHNILLSHAAAVHNYKTNYQAKQGGSIGIVVAMKWYEPLTNSTEDVRAARRALAFEVDWYGFACYLPFL.

A signal peptide spans 1-27; the sequence is MMAVAAATRIAVVVVAALAALAPGARG. A beta-D-glucoside contacts are provided by residues Gln47, His149, and 194 to 195; that span reads NE. The active-site Proton donor is Glu195. A disulfide bridge links Cys214 with Cys221. N-linked (GlcNAc...) asparagine glycosylation occurs at Asn274.

The protein belongs to the glycosyl hydrolase 1 family.

It catalyses the reaction Hydrolysis of terminal, non-reducing beta-D-glucosyl residues with release of beta-D-glucose.. The chain is Putative beta-glucosidase 17 (BGLU17) from Oryza sativa subsp. japonica (Rice).